The sequence spans 187 residues: Coiled-coil domain-containing protein 201 (187 aa).

Disordered stretches follow at residues 1 to 79 and 92 to 159; these read MEPG…PPAT and KESS…RAAA. The stretch at 111–131 forms a coiled coil; the sequence is LTQRQRQRQQQQQQQESLRAK. The segment covering 147 to 157 has biased composition (basic residues); that stretch reads GRKRRDPKKRA.

In Homo sapiens (Human), this protein is Coiled-coil domain-containing protein 201.